Reading from the N-terminus, the 565-residue chain is Sulfite reductase [NADPH] hemoprotein beta-component (565 aa).

Cys429, Cys435, Cys474, and Cys478 together coordinate [4Fe-4S] cluster. Residue Cys478 coordinates siroheme.

The protein belongs to the nitrite and sulfite reductase 4Fe-4S domain family. Alpha(8)-beta(8). The alpha component is a flavoprotein, the beta component is a hemoprotein. Requires siroheme as cofactor. [4Fe-4S] cluster serves as cofactor.

The enzyme catalyses hydrogen sulfide + 3 NADP(+) + 3 H2O = sulfite + 3 NADPH + 4 H(+). It functions in the pathway sulfur metabolism; hydrogen sulfide biosynthesis; hydrogen sulfide from sulfite (NADPH route): step 1/1. Its function is as follows. Component of the sulfite reductase complex that catalyzes the 6-electron reduction of sulfite to sulfide. This is one of several activities required for the biosynthesis of L-cysteine from sulfate. The polypeptide is Sulfite reductase [NADPH] hemoprotein beta-component (Shewanella pealeana (strain ATCC 700345 / ANG-SQ1)).